The chain runs to 375 residues: Carbamoyl phosphate synthase small chain (375 aa).

Residues 1–184 form a CPSase region; it reads MVSLYLENGL…LDYKPFDEKI (184 aa). Positions 44, 240, and 242 each coordinate L-glutamine. One can recognise a Glutamine amidotransferase type-1 domain in the interval 188–375; sequence IIAVLDFGAK…KEFVGLLEGF (188 aa). Catalysis depends on cysteine 268, which acts as the Nucleophile. L-glutamine-binding residues include leucine 269, glutamine 272, asparagine 310, and tyrosine 313. Residues histidine 351 and glutamate 353 contribute to the active site.

Belongs to the CarA family. As to quaternary structure, composed of two chains; the small (or glutamine) chain promotes the hydrolysis of glutamine to ammonia, which is used by the large (or ammonia) chain to synthesize carbamoyl phosphate. Tetramer of heterodimers (alpha,beta)4.

The catalysed reaction is hydrogencarbonate + L-glutamine + 2 ATP + H2O = carbamoyl phosphate + L-glutamate + 2 ADP + phosphate + 2 H(+). It catalyses the reaction L-glutamine + H2O = L-glutamate + NH4(+). It participates in amino-acid biosynthesis; L-arginine biosynthesis; carbamoyl phosphate from bicarbonate: step 1/1. The protein operates within pyrimidine metabolism; UMP biosynthesis via de novo pathway; (S)-dihydroorotate from bicarbonate: step 1/3. In terms of biological role, small subunit of the glutamine-dependent carbamoyl phosphate synthetase (CPSase). CPSase catalyzes the formation of carbamoyl phosphate from the ammonia moiety of glutamine, carbonate, and phosphate donated by ATP, constituting the first step of 2 biosynthetic pathways, one leading to arginine and/or urea and the other to pyrimidine nucleotides. The small subunit (glutamine amidotransferase) binds and cleaves glutamine to supply the large subunit with the substrate ammonia. The protein is Carbamoyl phosphate synthase small chain of Helicobacter pylori (strain J99 / ATCC 700824) (Campylobacter pylori J99).